A 108-amino-acid polypeptide reads, in one-letter code: uncharacterized protein (108 aa).

Over residues 1 to 14 the composition is skewed to polar residues; that stretch reads MSDSNSRLVYSTET. Positions 1–31 are disordered; that stretch reads MSDSNSRLVYSTETGRIDEPKAAPVRPKGDG. Basic and acidic residues predominate over residues 15 to 31; it reads GRIDEPKAAPVRPKGDG.

This sequence belongs to the SUI1 family.

This is an uncharacterized protein from Escherichia coli (strain K12).